The primary structure comprises 240 residues: NADH-quinone oxidoreductase subunit C (240 aa).

Residues 1–82 (MSEEEKPKPK…PVDENRDPEP (82 aa)) are disordered. Positions 11–20 (LSPALAAKMA) are enriched in low complexity. Positions 67 to 82 (DKPKAEPVDENRDPEP) are enriched in basic and acidic residues.

This sequence belongs to the complex I 30 kDa subunit family. In terms of assembly, NDH-1 is composed of 14 different subunits. Subunits NuoB, C, D, E, F, and G constitute the peripheral sector of the complex.

The protein localises to the cell inner membrane. The enzyme catalyses a quinone + NADH + 5 H(+)(in) = a quinol + NAD(+) + 4 H(+)(out). Functionally, NDH-1 shuttles electrons from NADH, via FMN and iron-sulfur (Fe-S) centers, to quinones in the respiratory chain. The immediate electron acceptor for the enzyme in this species is believed to be a menaquinone. Couples the redox reaction to proton translocation (for every two electrons transferred, four hydrogen ions are translocated across the cytoplasmic membrane), and thus conserves the redox energy in a proton gradient. This Chloroherpeton thalassium (strain ATCC 35110 / GB-78) protein is NADH-quinone oxidoreductase subunit C.